We begin with the raw amino-acid sequence, 103 residues long: Co-chaperonin GroES (103 aa).

This sequence belongs to the GroES chaperonin family. As to quaternary structure, heptamer of 7 subunits arranged in a ring. Interacts with the chaperonin GroEL.

Its subcellular location is the cytoplasm. Its function is as follows. Together with the chaperonin GroEL, plays an essential role in assisting protein folding. The GroEL-GroES system forms a nano-cage that allows encapsulation of the non-native substrate proteins and provides a physical environment optimized to promote and accelerate protein folding. GroES binds to the apical surface of the GroEL ring, thereby capping the opening of the GroEL channel. The polypeptide is Co-chaperonin GroES (Rippkaea orientalis (strain PCC 8801 / RF-1) (Cyanothece sp. (strain PCC 8801))).